The following is a 157-amino-acid chain: Hydra actinoporin-like toxin 3 (157 aa).

The signal sequence occupies residues 1–14 (LEATVSRNKKYKFT). The Cell attachment site motif lies at 129–131 (IAG).

Belongs to the actinoporin family. HALT subfamily. In terms of assembly, octamer or nonamer in membranes. Monomer in the soluble state. In vitro, interacts with folate receptor alpha (of target organism).

The protein resides in the nematocyst. Its subcellular location is the secreted. It localises to the target cell membrane. Functionally, pore-forming protein that forms hydrophilic pores and causes cytolysis. Compared to equinatoxin-2 (AC P61914), it reveals lower cytolysis activity (5-12-fold difference, tested on erythrocytes), a larger pore size (probably 2-3 nm) and different affinity to membrane lipids (100-fold lower affinity to sphingomyelin). Binds to the two sphingolipids, lysophosphatidic acid (LPA) and sphingosine-1-phosphate (S1P). Does not bind (or only weakly) to sulfatides (SFT). Shows cytolytic activity on HeLa cells, with a different potency than its paralogs (from most potent to less potent: HALT-4&gt;HALT-6~HALT-1&gt;HALT-3&gt;HALT-7&gt;HALT-2). Pore formation is a multi-step process that involves specific recognition of membrane lipid by a protein aromatic residues rich region, firm binding to the membrane (mainly driven by hydrophobic interactions) accompanied by the transfer of the N-terminal region to the lipid-water interface and finally pore formation after oligomerization of monomers. In vitro, binds to the folate receptor alpha (FOLR1), a GPI-anchored membrane protein that plays a major role in the uptake of folate/folic acid into cells via endocytosis, suggesting a possible involvement of this receptor in the mechanism of HALT-1-induced cell lysis. In vivo, does not cause visible paralysis in larvae of the blowfly Sarcophaga faculata, the most common arthropod prey of Hydra. This Hydra vulgaris (Hydra) protein is Hydra actinoporin-like toxin 3.